The chain runs to 1234 residues: Transcription-repair-coupling factor (1234 aa).

Residues 663-824 form the Helicase ATP-binding domain; that stretch reads DMEKPIPMDR…LAGIREMSTI (162 aa). 676–683 lines the ATP pocket; that stretch reads GDVGYGKT. A DEEQ box motif is present at residues 777–780; sequence DEEQ. The Helicase C-terminal domain occupies 842 to 999; that stretch reads DDKQIAAALR…GMAVALKDLE (158 aa). Residues 1207–1234 are disordered; it reads RQHIGITNPSPPGEDGRGRNTTIKERQP. Residues 1220–1234 show a composition bias toward basic and acidic residues; it reads EDGRGRNTTIKERQP.

It in the N-terminal section; belongs to the UvrB family. This sequence in the C-terminal section; belongs to the helicase family. RecG subfamily.

The protein resides in the cytoplasm. In terms of biological role, couples transcription and DNA repair by recognizing RNA polymerase (RNAP) stalled at DNA lesions. Mediates ATP-dependent release of RNAP and its truncated transcript from the DNA, and recruitment of nucleotide excision repair machinery to the damaged site. The chain is Transcription-repair-coupling factor from Mycobacterium bovis (strain ATCC BAA-935 / AF2122/97).